A 40-amino-acid polypeptide reads, in one-letter code: uncharacterized protein (40 aa).

Positions 1–27 are cleaved as a signal peptide; that stretch reads MFPADVILQCFGFSVGIALVGYVISLF.

This is an uncharacterized protein from Archaeoglobus fulgidus (strain ATCC 49558 / DSM 4304 / JCM 9628 / NBRC 100126 / VC-16).